Reading from the N-terminus, the 1273-residue chain is Lysine-specific histone demethylase 2 (1273 aa).

Over residues 199–230 (ENFFDANSPSSQQFPSTYPSRSQNPLSSSGDG) the composition is skewed to polar residues. A disordered region spans residues 199 to 237 (ENFFDANSPSSQQFPSTYPSRSQNPLSSSGDGSTAIHAG). Positions 247 to 307 (FSNYPYPLDA…LSKSVDNAVL (61 aa)) form a coiled coil. In terms of domain architecture, SWIRM spans 394–490 (AAEAARKCNL…YGCLSFDSSF (97 aa)). FAD is bound by residues 509–551 (IAVV…ILEA), Thr517, Glu550, Arg558, and 572–573 (TQ). Residues 542-1198 (LPPKVIILEA…GKILRYQRLT (657 aa)) form a demethylase activity region. Residues 571–596 (ATQINHHTSNSNSISSNSTSLNPKDV) form a disordered region. Residues 574–590 (INHHTSNSNSISSNSTS) are compositionally biased toward low complexity. A coiled-coil region spans residues 681 to 767 (SVRISWISQF…NTVDTDFSKD (87 aa)). The HMG box DNA-binding region spans 1115–1195 (SKPNANPFLL…AYAGKILRYQ (81 aa)). FAD-binding positions include Asp1147 and 1156–1157 (ET). Residues 1215–1273 (KCQDEPIPDDEARLFMQAQREEEQRKQTQDDNISKSREASDEEYHDDGSSDSGYNGTRY) form a disordered region. Positions 1233 to 1253 (QREEEQRKQTQDDNISKSREA) are enriched in basic and acidic residues. A compositionally biased stretch (polar residues) spans 1264-1273 (SDSGYNGTRY).

The protein belongs to the flavin monoamine oxidase family. In terms of assembly, component of the SWM histone demethylase complex composed of at least lsd1, lsd2, phf1 and phf2. Interacts directly with lsd1. It depends on FAD as a cofactor.

It localises to the nucleus. Its function is as follows. Catalytic component of the SWM histone demethylase complex that specifically demethylates H3K9me2, a specific tag for epigenetic transcriptional activation, thereby acting as a corepressor. Acts by oxidizing the substrate by FAD to generate the corresponding imine that is subsequently hydrolyzed. Has a role in regulating heterochromatin propagation and euchromatic transcription. Also has a gene activating role. This chain is Lysine-specific histone demethylase 2 (lsd2), found in Schizosaccharomyces pombe (strain 972 / ATCC 24843) (Fission yeast).